The chain runs to 80 residues: Three-finger toxin MALT0059C (80 aa).

The N-terminal stretch at 1-21 (MRTLLLTLVVVTIVCLDLGNS) is a signal peptide. Intrachain disulfides connect cysteine 24-cysteine 41, cysteine 35-cysteine 60, cysteine 64-cysteine 72, and cysteine 73-cysteine 78.

The protein belongs to the three-finger toxin family. Short-chain subfamily. In terms of tissue distribution, expressed by the venom gland.

The protein localises to the secreted. Its function is as follows. Neurotoxin. Blocks muscular nicotinic acetylcholine receptors (nAChR). The protein is Three-finger toxin MALT0059C of Micrurus altirostris (Uruguayan coral snake).